A 132-amino-acid chain; its full sequence is uncharacterized protein (132 aa).

Disordered regions lie at residues 36 to 69 and 97 to 132; these read GLAS…PNIS and QIND…PTAR. S101 carries the post-translational modification Phosphoserine.

In terms of assembly, copurifies with proteins HOL1, MMP1, PEX7 and PLB1.

This is an uncharacterized protein from Saccharomyces cerevisiae (strain ATCC 204508 / S288c) (Baker's yeast).